We begin with the raw amino-acid sequence, 393 residues long: Aspartate aminotransferase (393 aa).

The L-aspartate site is built by G38, W124, and N174. An N6-(pyridoxal phosphate)lysine modification is found at K237.

It belongs to the class-I pyridoxal-phosphate-dependent aminotransferase family. In terms of assembly, homodimer. Pyridoxal 5'-phosphate serves as cofactor.

The protein localises to the cytoplasm. The enzyme catalyses L-aspartate + 2-oxoglutarate = oxaloacetate + L-glutamate. In Bacillus subtilis (strain 168), this protein is Aspartate aminotransferase (aspB).